The primary structure comprises 511 residues: 2-methylbutanal oxime monooxygenase (511 aa).

2 consecutive transmembrane segments (helical) span residues 10 to 30 (PPQW…LLLF) and 304 to 324 (ILMN…TWAF). Residue Cys451 participates in heme binding.

Belongs to the cytochrome P450 family. Heme is required as a cofactor. As to expression, expressed in storage roots, primary roots, petioles and vascular tissues. Expressed in the outer cortex cells, the endodermis and around the xylem, phloem cells and laticifers.

The protein localises to the microsome membrane. The enzyme catalyses (1E,2S)-2-methylbutanal oxime + reduced [NADPH--hemoprotein reductase] + O2 = 2-hydroxy-2-methylbutanenitrile + oxidized [NADPH--hemoprotein reductase] + 2 H2O + H(+). It carries out the reaction (E)-2-methylpropanal oxime + reduced [NADPH--hemoprotein reductase] + O2 = 2-hydroxy-2-methylpropanenitrile + oxidized [NADPH--hemoprotein reductase] + 2 H2O + H(+). In terms of biological role, catalyzes the conversion of (E)-2-methylpropanal oxime (valox) to 2-hydroxy-2-methylpropanenitrile (acetone cyanohydrin) and of (E)-2-methylbutanal oxime (ilox) to 2-hydroxy-2-methylbutyronitrile. The reaction takes place in three steps. First, the oxime is isomerized to the (Z)- isomer, next the (Z)-isomer is dehydrated to the corresponding nitrile, followed by a C-hydroxylation of the nitrile. Can use both aliphatic and aromatic oximes as substrates. This is 2-methylbutanal oxime monooxygenase (CYP71E7) from Manihot esculenta (Cassava).